The sequence spans 172 residues: Large ribosomal subunit protein uL10 (172 aa).

It belongs to the universal ribosomal protein uL10 family. As to quaternary structure, part of the ribosomal stalk of the 50S ribosomal subunit. The N-terminus interacts with L11 and the large rRNA to form the base of the stalk. The C-terminus forms an elongated spine to which L12 dimers bind in a sequential fashion forming a multimeric L10(L12)X complex.

Its function is as follows. Forms part of the ribosomal stalk, playing a central role in the interaction of the ribosome with GTP-bound translation factors. The protein is Large ribosomal subunit protein uL10 of Chlamydia trachomatis serovar L2 (strain ATCC VR-902B / DSM 19102 / 434/Bu).